Here is a 134-residue protein sequence, read N- to C-terminus: Profilin (134 aa).

The protein belongs to the profilin family. Occurs in many kinds of cells as a complex with monomeric actin in a 1:1 ratio.

It localises to the cytoplasm. The protein resides in the cytoskeleton. Its function is as follows. Binds to actin and affects the structure of the cytoskeleton. At high concentrations, profilin prevents the polymerization of actin, whereas it enhances it at low concentrations. By binding to PIP2, it inhibits the formation of IP3 and DG. In Daucus carota (Wild carrot), this protein is Profilin.